An 81-amino-acid chain; its full sequence is Defensin-like protein 266 (81 aa).

Positions 1–26 (MEKIVFRKIVFVAFLLSLSCLLEGEA) are cleaved as a signal peptide. Disulfide bonds link Cys40–Cys58, Cys46–Cys63, and Cys50–Cys65.

Belongs to the DEFL family.

The protein localises to the secreted. The chain is Defensin-like protein 266 from Arabidopsis thaliana (Mouse-ear cress).